We begin with the raw amino-acid sequence, 235 residues long: MADSKMKWGQAWDSSLGTATTSSSSATGSPSPFQNIRVPDTRAPRVAHTTFTLEAFECLAASQAGRLWKQVRQFWVDHFSRRFSPRRPPLRHISSMSTFYLLDHRTRQAELGLNYGEPRTRLSDEAFVFRGGRWTPEGKRASARTPLPSSTIPAWKPQVQPIKSQVLLEENNYLKLQQELLMDMLTETTARMQLLEKKVDADNNPAAPARSWKRKMPKQRGAGVLIIQPRALESR.

Positions 1 to 41 (MADSKMKWGQAWDSSLGTATTSSSSATGSPSPFQNIRVPDT) are disordered. Residues 14 to 32 (SSLGTATTSSSSATGSPSP) show a composition bias toward low complexity. The leucine-zipper; mediates homodimerization stretch occupies residues 167 to 181 (LLEENNYLKLQQELL).

Belongs to the chibby family. As to quaternary structure, homodimer. Interacts with CIBAR1 (via BAR-like domain); both proteins form a ninefold symmetric structure at the flagellar base; are recruited to the annulus in a mutually dependent manner and regulate annulus positionning. In terms of tissue distribution, testis-specific.

The protein resides in the cell projection. It is found in the cilium. The protein localises to the flagellum. Functionally, plays a key role in the correct positioning of the annulus, a septin-based ring strucure in the sperm flagellum, serving both as a physical barrier and a membrane diffusion barrier that separates the midpiece (MP) from the principal piece (PP). This positioning is essential for proper sperm motility and function. Interacts with CIBAR1 to form a complex which localizes to the curved membrane region of the flagellar pocket. By doing so, may provide stability and rigidity to the periannular membrane to prevent membrane deformation. This function is crucial for halting annulus migration at the proximal end of the fibrous sheath-containing PP. The sequence is that of Sperm annulus positionning complex subunit Chibby3 (Cby3) from Mus musculus (Mouse).